We begin with the raw amino-acid sequence, 137 residues long: Nucleoside diphosphate kinase (137 aa).

ATP-binding residues include lysine 9, phenylalanine 58, arginine 86, threonine 92, arginine 103, and asparagine 113. Histidine 121 functions as the Pros-phosphohistidine intermediate in the catalytic mechanism.

This sequence belongs to the NDK family. Homotetramer. The cofactor is Mg(2+).

It is found in the cytoplasm. The catalysed reaction is a 2'-deoxyribonucleoside 5'-diphosphate + ATP = a 2'-deoxyribonucleoside 5'-triphosphate + ADP. The enzyme catalyses a ribonucleoside 5'-diphosphate + ATP = a ribonucleoside 5'-triphosphate + ADP. Its function is as follows. Major role in the synthesis of nucleoside triphosphates other than ATP. The ATP gamma phosphate is transferred to the NDP beta phosphate via a ping-pong mechanism, using a phosphorylated active-site intermediate. This Streptococcus pneumoniae (strain P1031) protein is Nucleoside diphosphate kinase.